Here is a 347-residue protein sequence, read N- to C-terminus: Cell shape-determining protein MreB (347 aa).

Residues 19 to 21, 165 to 167, 213 to 216, and 295 to 298 contribute to the ATP site; these read TAN, GGT, ERIK, and GGAL.

Belongs to the FtsA/MreB family. In terms of assembly, forms polymers in the presence of ATP. Forms pairs of protofilaments that adopt an antiparallel arrangement and bind to lipids.

The protein localises to the cytoplasm. Functionally, forms membrane-associated dynamic filaments that are essential for cell shape determination. Acts by regulating cell wall synthesis and cell elongation, and thus cell shape. A feedback loop between cell geometry and MreB localization may maintain elongated cell shape by targeting cell wall growth to regions of negative cell wall curvature. Required for mid-cell peptidoglycan synthesis and cell division. Directs the localization of the cytosolic peptidoglycan precursor-synthesizing enzyme MurG. Also required for proper chromosome segregation. Directs the segregation of origin-proximal but not origin-distal loci. In Caulobacter vibrioides (strain NA1000 / CB15N) (Caulobacter crescentus), this protein is Cell shape-determining protein MreB.